Reading from the N-terminus, the 128-residue chain is Sm-like protein LSM1B (128 aa).

Positions 10–85 (YLSTSLASYL…VVLIGELDTE (76 aa)) constitute a Sm domain.

The protein belongs to the snRNP Sm proteins family. Component of the heptameric LSM1-LSM7 complex that forms a seven-membered ring structure with a donut shape. The LSM subunits are arranged in the order LSM1, LSM2, LSM3, LSM6, LSM5, LSM7 and LSM4. LSM1B subunit interacts only with its two neighboring subunits, LSM2 and LSM4. As to expression, expressed in roots, leaves, stems, flowers and siliques.

It localises to the cytoplasm. It is found in the P-body. Its function is as follows. Component of the cytoplasmic LSM1-LSM7 complex which is involved in mRNA degradation by promoting decapping and leading to accurate 5'-3' mRNA decay. LSM1A and LSM1B are essential for the formation of the cytoplasmic LSM1-LSM7 complex which regulates developmental gene expression by the decapping of specific development-related transcripts. Required for P-body formation during heat stress. The sequence is that of Sm-like protein LSM1B from Arabidopsis thaliana (Mouse-ear cress).